The sequence spans 97 residues: Acylphosphatase-2 (97 aa).

Residue A2 is modified to N-acetylalanine. One can recognise an Acylphosphatase-like domain in the interval 7-97 (SVDYEVFGTV…LEYSNFSIRY (91 aa)). Active-site residues include R22 and N40. S91 is subject to Phosphoserine.

The protein belongs to the acylphosphatase family.

It catalyses the reaction an acyl phosphate + H2O = a carboxylate + phosphate + H(+). Its physiological role is not yet clear. In Rattus norvegicus (Rat), this protein is Acylphosphatase-2 (Acyp2).